The sequence spans 101 residues: Urease subunit beta (101 aa).

This sequence belongs to the urease beta subunit family. In terms of assembly, heterotrimer of UreA (gamma), UreB (beta) and UreC (alpha) subunits. Three heterotrimers associate to form the active enzyme.

It is found in the cytoplasm. It carries out the reaction urea + 2 H2O + H(+) = hydrogencarbonate + 2 NH4(+). It participates in nitrogen metabolism; urea degradation; CO(2) and NH(3) from urea (urease route): step 1/1. The chain is Urease subunit beta from Burkholderia ambifaria (strain MC40-6).